The primary structure comprises 155 residues: Ferredoxin-6, chloroplastic (155 aa).

The N-terminal 58 residues, 1–58, are a transit peptide targeting the chloroplast; it reads MSTATAPRLPAPRSGASYHYQTTAAPAANTLSFAGHARQAARASGPRLSSRFVASAAA. Positions 61-152 constitute a 2Fe-2S ferredoxin-type domain; the sequence is HKVKLVGPDG…DCVIHTHKEE (92 aa). [2Fe-2S] cluster is bound by residues Cys-98, Cys-103, Cys-106, and Cys-136.

This sequence belongs to the 2Fe2S plant-type ferredoxin family. The cofactor is [2Fe-2S] cluster.

It is found in the plastid. Its subcellular location is the chloroplast. Ferredoxins are iron-sulfur proteins that transfer electrons in a wide variety of metabolic reactions. This Zea mays (Maize) protein is Ferredoxin-6, chloroplastic (FDX6).